A 156-amino-acid chain; its full sequence is MSRKGHIKKRDVNPDPIYNSKLVTKVINVIMQDGKKGKAQTIFYQALKKVQLMTKREPLEVFRDALNNIMPVLEVRTRRVGGQNYQVPSEIRPERRQSLGLKWLVKFTKQCNEKTMKDKLAKEIVDASLGHGVSVKKREETHRMAEANKAFAHYRW.

The protein belongs to the universal ribosomal protein uS7 family. In terms of assembly, part of the 30S ribosomal subunit. Contacts proteins S9 and S11.

Its function is as follows. One of the primary rRNA binding proteins, it binds directly to 16S rRNA where it nucleates assembly of the head domain of the 30S subunit. Is located at the subunit interface close to the decoding center, probably blocks exit of the E-site tRNA. This Phytoplasma australiense protein is Small ribosomal subunit protein uS7.